The chain runs to 1243 residues: Protein MMS22-like (1243 aa).

This sequence belongs to the MMS22 family. MMS22L subfamily. As to quaternary structure, component of the MMS22L-TONSL complex, a complex at least composed of MMS22L and TONSL/NFKBIL2. Interacts with RAD51; interaction is direct. Post-translationally, degraded by the ubiquitin-proteasome system upon replication stress.

The protein localises to the nucleus. The protein resides in the chromosome. Component of the MMS22L-TONSL complex, a complex that promotes homologous recombination-mediated repair of double-strand breaks (DSBs) at stalled or collapsed replication forks. The MMS22L-TONSL complex is required to maintain genome integrity during DNA replication. It mediates the assembly of RAD51 filaments on single-stranded DNA (ssDNA): the MMS22L-TONSL complex is recruited to DSBs following histone replacement by histone chaperones and eviction of the replication protein A complex (RPA/RP-A) from DSBs. Following recruitment to DSBs, the TONSL-MMS22L complex promotes recruitment of RAD51 filaments and subsequent homologous recombination. Within the complex, MMS22L acts by binding ssDNA. In Homo sapiens (Human), this protein is Protein MMS22-like.